Here is a 319-residue protein sequence, read N- to C-terminus: MERTNCSAASTVVETAVGTMLTLECVLGLMGNAVALWTFFYRLKVWKPYAVYLFNLVVADLLLATSLPFFAAFYLKGKTWKLGHMPCQVLLFLLAFSRGVGVAFLTTVALDRYLRVVHPRLRVNLLSLRAAWGISSLIWLLMVVLTPQNLLTCRTTQNSTECPSFYPTGGAKAIATCQEVLFFLQVLLPFGLISFCNSGLIRTLQKRLRESDKQPRIRRARVLVAIVLLLFGLCFLPSVLTRVLVHIFQEFKSCSVQQAIVRASDIAGSLTCLHSTLSPAIYCFSNPAFTHSYRKVLKSLRGRRKAAESPSDNLRDSYS.

Residues 1–16 (MERTNCSAASTVVETA) are Extracellular-facing. Residue N5 is glycosylated (N-linked (GlcNAc...) asparagine). The chain crosses the membrane as a helical span at residues 17–37 (VGTMLTLECVLGLMGNAVALW). Over 38-52 (TFFYRLKVWKPYAVY) the chain is Cytoplasmic. A helical transmembrane segment spans residues 53 to 73 (LFNLVVADLLLATSLPFFAAF). Topologically, residues 74–91 (YLKGKTWKLGHMPCQVLL) are extracellular. Residues 92–110 (FLLAFSRGVGVAFLTTVAL) traverse the membrane as a helical segment. Over 111–131 (DRYLRVVHPRLRVNLLSLRAA) the chain is Cytoplasmic. A helical transmembrane segment spans residues 132–152 (WGISSLIWLLMVVLTPQNLLT). Residues 153–180 (CRTTQNSTECPSFYPTGGAKAIATCQEV) lie on the Extracellular side of the membrane. Residues 181 to 201 (LFFLQVLLPFGLISFCNSGLI) traverse the membrane as a helical segment. The Cytoplasmic portion of the chain corresponds to 202-219 (RTLQKRLRESDKQPRIRR). A helical transmembrane segment spans residues 220–240 (ARVLVAIVLLLFGLCFLPSVL). Residues 241–265 (TRVLVHIFQEFKSCSVQQAIVRASD) are Extracellular-facing. A helical transmembrane segment spans residues 266–284 (IAGSLTCLHSTLSPAIYCF). The Cytoplasmic portion of the chain corresponds to 285–319 (SNPAFTHSYRKVLKSLRGRRKAAESPSDNLRDSYS).

This sequence belongs to the G-protein coupled receptor 1 family. As to quaternary structure, interacts with KRAS; in a farnesylation-dependent manner.

Its subcellular location is the cell membrane. Functionally, high-affinity receptor for 12-(S)-hydroxy-5,8,10,14-eicosatetraenoic acid (12-S-HETE), with much lower affinities for other HETE isomers. 12-S-HETE is a eicosanoid, a 12-lipoxygenase (ALOX12) metabolite of arachidonic acid, involved in many physiologic and pathologic processes, such as cell growth, adhesion, inflammation and cancer promotion. 12-S-HETE-binding leads to activation of ERK1/2 (MAPK3/MAPK1), MEK, and NF-kappa-B pathways and leads to cell growth. Plays a crucial role for proliferation, survival and macropinocytosis of KRAS-dependent cancer cells by mediating the translocation of KRAS from the endoplasmic reticulum to the plasma membrane (PM) and its association with the PM. Contributes to enhanced immune responses by inducing dendrite protrusion of small intestinal CX3CR1(+) phagocytes for the uptake of luminal antigens. Also acts as a key receptor for 12-(S)-HETE-mediated liver ischemia reperfusion injury. In terms of biological role, proton-sensing G protein-coupled receptor. The chain is 12-(S)-hydroxy-5,8,10,14-eicosatetraenoic acid receptor (Gpr31) from Mus musculus (Mouse).